The following is a 453-amino-acid chain: Alpha-glucosidase (453 aa).

Residue 3–69 (TKIVLVGAGS…LPFIVSATTD (67 aa)) participates in NAD(+) binding. Asn-149 lines the substrate pocket. Cys-171 serves as a coordination point for Mn(2+). The active-site Proton donor is the His-172. Position 201 (His-201) interacts with Mn(2+).

In terms of assembly, homotetramer. Mn(2+) serves as cofactor. Co(2+) is required as a cofactor. Requires Ca(2+) as cofactor. It depends on Fe(2+) as a cofactor. The cofactor is Mg(2+). Sr(2+) serves as cofactor. Ni(2+) is required as a cofactor. Requires NAD(+) as cofactor.

It carries out the reaction Hydrolysis of terminal, non-reducing (1-&gt;4)-linked alpha-D-glucose residues with release of alpha-D-glucose.. It functions in the pathway glycan degradation; palatinose degradation. Is inhibited by EDTA in vitro. Functionally, alpha-glucosidase with broad specificity. Hydrolyzes maltose, palatinose, maltulose, trehalose, trehalulose, turanose, leucrose, sucrose and maltitol. Is not active against alpha-galactosides, e.g. melibiose, and alpha-mannosides. Shows an obligate requirement for an O-alpha-glycosidic linkage, since it is not able to cleave beta-glycosidic bonds (cellobiose, gentiobiose, lactose, sophorose or laminaribiose). Cannot hydrolyze phosphorylated alpha-glucosides derivatives. Seems to be involved in the degradation of palatinose, a sucrose isomer that is formed as a reserve material under conditions of excess carbon availability, sequestered in a form unavailable to competitors such as fungi or the host plant, and whose consumption appears to be postponed until the preferentially metabolized carbon source (e.g. sucrose) is depleted. This chain is Alpha-glucosidase (palH), found in Erwinia rhapontici (Pectobacterium rhapontici).